The following is an 85-amino-acid chain: UPF0335 protein BH15140 (85 aa).

It belongs to the UPF0335 family.

This is UPF0335 protein BH15140 from Bartonella henselae (strain ATCC 49882 / DSM 28221 / CCUG 30454 / Houston 1) (Rochalimaea henselae).